Reading from the N-terminus, the 363-residue chain is Fructose-bisphosphate aldolase C (363 aa).

Residue tyrosine 5 is modified to Phosphotyrosine. Serine 36, serine 39, and serine 45 each carry phosphoserine. Position 56 (arginine 56) interacts with substrate. Lysine 111 is modified (N6-acetyllysine). Substrate is bound at residue lysine 147. Glutamate 188 (proton acceptor) is an active-site residue. Lysine 230 (schiff-base intermediate with dihydroxyacetone-P) is an active-site residue.

The protein belongs to the class I fructose-bisphosphate aldolase family. Homotetramer. Interacts with ATP6V1E1. As to expression, high expression in the adult brain.

It carries out the reaction beta-D-fructose 1,6-bisphosphate = D-glyceraldehyde 3-phosphate + dihydroxyacetone phosphate. It functions in the pathway carbohydrate degradation; glycolysis; D-glyceraldehyde 3-phosphate and glycerone phosphate from D-glucose: step 4/4. The polypeptide is Fructose-bisphosphate aldolase C (Aldoc) (Rattus norvegicus (Rat)).